A 660-amino-acid chain; its full sequence is Acetyl-coenzyme A synthetase (660 aa).

Residues Arg197–Lys200 and Thr317 contribute to the CoA site. ATP-binding positions include Gly397–Pro399, Asp421–Thr426, Asp512, and Arg528. Ser536 is a CoA binding site. An ATP-binding site is contributed by Arg539. The Mg(2+) site is built by Val550 and Val555. Position 625 is an N6-acetyllysine (Lys625).

Belongs to the ATP-dependent AMP-binding enzyme family. The cofactor is Mg(2+). Acetylated. Deacetylation by the SIR2-homolog deacetylase activates the enzyme.

It catalyses the reaction acetate + ATP + CoA = acetyl-CoA + AMP + diphosphate. Its function is as follows. Catalyzes the conversion of acetate into acetyl-CoA (AcCoA), an essential intermediate at the junction of anabolic and catabolic pathways. AcsA undergoes a two-step reaction. In the first half reaction, AcsA combines acetate with ATP to form acetyl-adenylate (AcAMP) intermediate. In the second half reaction, it can then transfer the acetyl group from AcAMP to the sulfhydryl group of CoA, forming the product AcCoA. In Herminiimonas arsenicoxydans, this protein is Acetyl-coenzyme A synthetase.